The primary structure comprises 233 residues: Large ribosomal subunit protein uL1 (233 aa).

This sequence belongs to the universal ribosomal protein uL1 family. In terms of assembly, part of the 50S ribosomal subunit.

Functionally, binds directly to 23S rRNA. The L1 stalk is quite mobile in the ribosome, and is involved in E site tRNA release. Protein L1 is also a translational repressor protein, it controls the translation of the L11 operon by binding to its mRNA. The polypeptide is Large ribosomal subunit protein uL1 (Brucella canis (strain ATCC 23365 / NCTC 10854 / RM-666)).